We begin with the raw amino-acid sequence, 477 residues long: Bifunctional enzyme PyrF/PyrE (477 aa).

Residues methionine 1 to serine 273 are OMP decarboxylase. The active-site Proton donor is lysine 96. The orotate phosphoribosyltransferase stretch occupies residues valine 274–glutamate 477. 5-phospho-alpha-D-ribose 1-diphosphate-binding positions include arginine 374, lysine 375, lysine 378, histidine 380, and aspartate 400–serine 408.

This sequence in the N-terminal section; belongs to the OMP decarboxylase family. Type 2 subfamily. The protein in the C-terminal section; belongs to the purine/pyrimidine phosphoribosyltransferase family. Mg(2+) is required as a cofactor.

The enzyme catalyses orotidine 5'-phosphate + H(+) = UMP + CO2. It carries out the reaction orotidine 5'-phosphate + diphosphate = orotate + 5-phospho-alpha-D-ribose 1-diphosphate. It participates in pyrimidine metabolism; UMP biosynthesis via de novo pathway; UMP from orotate: step 1/2. The protein operates within pyrimidine metabolism; UMP biosynthesis via de novo pathway; UMP from orotate: step 2/2. Catalyzes the transfer of a ribosyl phosphate group from 5-phosphoribose 1-diphosphate to orotate, leading to the formation of orotidine monophosphate (OMP). Functionally, catalyzes the decarboxylation of orotidine monophosphate (OMP) to uridine monophosphate (UMP). This chain is Bifunctional enzyme PyrF/PyrE (pyrFE), found in Nostoc sp. (strain PCC 7120 / SAG 25.82 / UTEX 2576).